We begin with the raw amino-acid sequence, 327 residues long: METDSMECVSSTGNEIHQNGNGHQSYQFSSTKTHGGAAAAAVVTNIVGPTATAPATSVYELLECPVCTYSMYPPIHQCHNGHTLCSTCKVRVHNRCPTCRQELGDIRCLALEKVAESLELPCKFYNLGCPEIFPYYSKLKHESLCNFRPYSCPYAGSECGIVGDIPFLVAHLRDDHKVDMHAGSTFNHRYVKSNPREVENATWMLTVFHCFGQYFCLHFEAFQLGMGPVYMAFLRFMGDEEDARSYSYSLEVGGSGRKLTWEGTPRSIRDSHRKVRDSNDGLIIQRNMALFFSGGDRKELKLRVTGKIWKEQHSPDSGLSIPNLSSS.

Residues 1–27 are disordered; that stretch reads METDSMECVSSTGNEIHQNGNGHQSYQ. Positions 8 to 27 are enriched in polar residues; the sequence is CVSSTGNEIHQNGNGHQSYQ. Residues 64 to 100 form an RING-type zinc finger; it reads CPVCTYSMYPPIHQCHNGHTLCSTCKVRVHNRCPTCR. Positions 114 to 307 are SBD; the sequence is VAESLELPCK…KELKLRVTGK (194 aa). The segment at 117–177 adopts an SIAH-type zinc-finger fold; it reads SLELPCKFYN…LVAHLRDDHK (61 aa). The Zn(2+) site is built by Cys122, Cys129, His141, Cys145, Cys152, Cys159, His171, and His176.

Belongs to the SINA (Seven in absentia) family. In terms of assembly, interacts with SINAT6. Interacts with WAV3. Interacts with FREE1. Interacts with ELC/VPS23A.

Its subcellular location is the endosome. The protein localises to the multivesicular body. It is found in the cytoplasmic vesicle. The protein resides in the autophagosome. The enzyme catalyses S-ubiquitinyl-[E2 ubiquitin-conjugating enzyme]-L-cysteine + [acceptor protein]-L-lysine = [E2 ubiquitin-conjugating enzyme]-L-cysteine + N(6)-ubiquitinyl-[acceptor protein]-L-lysine.. Its pathway is protein modification; protein ubiquitination. Functionally, E3 ubiquitin-protein ligase that mediates ubiquitination and subsequent proteasomal degradation of target proteins. E3 ubiquitin ligases accept ubiquitin from an E2 ubiquitin-conjugating enzyme in the form of a thioester and then directly transfers the ubiquitin to targeted substrates. It probably triggers the ubiquitin-mediated degradation of different substrates. Modulates directly the ubiquitination and proteasomal-dependent degradation of FREE1, a component of the ESCRT-I complex. Modulates directly the ubiquitination and proteasomal-dependent degradation of ELC/VPS23A, a component of the ESCRT-I complex. In Arabidopsis thaliana (Mouse-ear cress), this protein is E3 ubiquitin-protein ligase SINAT4.